Consider the following 1196-residue polypeptide: MMMLIRCISIFLLFGFVNALIDEASCPIGWQIASDQCVRIVIAPANLKHSKKYCHHEGGELMDTSVTLLLEDVMDLLKNLHENGLSEPTFHVGGMGQALNRTEDGNYKIITINPSSHFPFICSLNKMARRSLLFQQKLLPVGAPQISLTGQSEIYFHPRHDADYIALPCTVQGNPKPTVAWYKNDVEVLSPSMSNVSYLLSGGNLLVPASSTLAYSSFHCTARNSLGEVRSPPILLKPSFIDPFRPHRLDVYSLATGGAKLDCDAPAHQPKSLTYSWLYGSSTDRILSQNERKFISLDGTLFFSYVTAEDEDSYACSLSVYSTQSGHYGPFFRLISSTPKLVNSTFPPKLDSTQPQIFPEDPKVGDSIYLECFAYASPLPQYKWSRVDGKPIPARSHISNYGRVLKIEKVNYGDAGKYKCVAMNAFGSAAGEVHVKLRAPPSILQGLHDRLVPTESNVSFECLLSNADSYSSVEWFKDAKPIVPLLLPAEKRKRLKIDHNVLHLKFADETDSGVYQCVASNDVGSSSSSALLTVKDSAPVFPPNAMSRKVFAAFGSTVSIPCIFEASPRFHGKWADAGGSKLPQKGRIRDEEGVISIEKVLHEDAGLFFCTAHNKLGKAHAQVQLIVVNKPSIKTNFLDEETVNMSCEVELTCENSAECPEALFEWKINDRPAKEYPSLKSKVHEKKSGHKGRHLKQKVDLEVPKSLAGSRQIGRFACSSLYGGSSEFVTKPQLPSPIALTVEQMDEDGKKKKMFRLRWRLPPQHRDTRDHSPKVEGYLVELRTRKNRKWRAAERQLVGNMEKDSITVENLLPNTEYQFRVRSVESAAIGEPSIPSDWVKTAPGAPSETIDNLKWRSLDSQTLLVEWQPIEIGQESSGDNLRYRVSWSEATVGKNATDDMKLSNQDDDFENHLDSDQPQAILKLNTTEGCRMVVLAVRPVNDQGNGSVGTDTIAFLNSHGELKKVSLHNVKPINASHVNISWTWDNTSDCDTKHAVQITCINLSGSEISATVASDRIFWMLGGLEAETAYDCDLKAIDNHGSFGPASKKFRIHTKQHPPSETPLIGKLMMKQMKDTYTTILEWSSIELQKPNRTENGCGYKIFIYISETATEAIELDMPLQRLSDRRNPSARLDGLKLMYMYTIKVAGYNPGGIGPISEPRSIRLGSPGTMDYTTGSSDVPIPSLLLLLLLLLWRL.

The signal sequence occupies residues 1–19 (MMMLIRCISIFLLFGFVNA). Residues Asn100 and Asn195 are each glycosylated (N-linked (GlcNAc...) asparagine). 2 Ig-like C2-type domains span residues 144–225 (PQIS…ARNS) and 232–319 (PPIL…CSLS). Cystine bridges form between Cys169-Cys220 and Cys263-Cys316. The N-linked (GlcNAc...) asparagine glycan is linked to Asn343. 4 consecutive Ig-like C2-type domains span residues 355–438 (PQIF…VKLR), 441–533 (PSIL…ALLT), 539–626 (PVFP…VQLI), and 631–730 (PSIK…EFVT). Cys372 and Cys420 form a disulfide bridge. Asn457 is a glycosylation site (N-linked (GlcNAc...) asparagine). Disulfide bonds link Cys462/Cys517 and Cys562/Cys610. N-linked (GlcNAc...) asparagine glycosylation is present at Asn644. A disulfide bond links Cys653 and Cys718. Fibronectin type-III domains lie at 736–844 (SPIA…TAPG), 849–961 (TIDN…SHGE), 963–1057 (KKVS…TKQH), and 1064–1168 (LIGK…LGSP). Asn895, Asn925, Asn945, Asn974, Asn979, Asn986, Asn1002, and Asn1092 each carry an N-linked (GlcNAc...) asparagine glycan. The chain crosses the membrane as a helical span at residues 1174 to 1194 (TTGSSDVPIPSLLLLLLLLLW). The GPI-anchor amidated serine moiety is linked to residue Ser1177. Positions 1178 to 1196 (SDVPIPSLLLLLLLLLWRL) are cleaved as a propeptide — removed in mature form.

The protein belongs to the immunoglobulin superfamily. Contactin family. In terms of assembly, interacts with sax-7; the interaction establishes synaptic connections between neurons. As to expression, expressed in neurons including the I1 and I3 pharyngeal interneurons, NSM and VNC motor neurons, HSN and CAN neurons, the ALM and PLM touch receptor neurons and other unidentified head neurons. Expressed in AVG interneurons. Also expressed in somatic muscles, the excretory canal, the excretory cell and the hypodermis.

It localises to the cell membrane. The protein resides in the perikaryon. Its subcellular location is the cell projection. It is found in the axon. The protein localises to the synapse. It localises to the cytoplasm. Functionally, probable cell adhesion protein involved in patterning of the nervous system, playing a role in ALM and PLM touch receptor axon growth and VNC axon navigation. By associating with the transmembrane protein sax-7, mediates axonal interactions to establish synaptic connections between the AVG interneuron and the two PHC sensory neurons. Also required for non-neuronal cell migration in the excretory canal, regulating excretory canal elongation and excretory cell morphogenesis. Plays a role in regulating male mating behavior. This is Contactin rig-6 from Caenorhabditis elegans.